A 315-amino-acid polypeptide reads, in one-letter code: tRNA dimethylallyltransferase (315 aa).

Residue glycine 11–serine 18 coordinates ATP. Position 13–18 (threonine 13–serine 18) interacts with substrate. Interaction with substrate tRNA stretches follow at residues aspartate 36–glutamine 39 and glutamine 160–arginine 164.

The protein belongs to the IPP transferase family. As to quaternary structure, monomer. It depends on Mg(2+) as a cofactor.

The catalysed reaction is adenosine(37) in tRNA + dimethylallyl diphosphate = N(6)-dimethylallyladenosine(37) in tRNA + diphosphate. Catalyzes the transfer of a dimethylallyl group onto the adenine at position 37 in tRNAs that read codons beginning with uridine, leading to the formation of N6-(dimethylallyl)adenosine (i(6)A). The sequence is that of tRNA dimethylallyltransferase from Rickettsia bellii (strain OSU 85-389).